Consider the following 283-residue polypeptide: Circadian clock oscillator protein KaiA (283 aa).

The tract at residues 3 to 133 is psR domain, binds oxidized quinones; sequence QSTALTICGL…VKLCPGCAVP (131 aa). The KaiA N-terminal domain maps to 3–163; that stretch reads QSTALTICGL…RLSQKLKERL (161 aa). Residues 164–172 form a flexible linker region; the sequence is GYLGVYYKR. A KaiA C-terminal domain is found at 173 to 281; the sequence is DTAFFFRRMS…CEMYRRSIPR (109 aa).

In terms of assembly, homodimer. The KaiABC complex composition changes during the circadian cycle to control KaiC phosphorylation. Complexes KaiC(6), KaiA(2-4):KaiC(6), KaiB(6):KaiC(6) and KaiC(6):KaiB(6):KaiA(12) are among the most important forms, many form cooperatively. KaiA and CikA bind to the same region of the KaiB(fs) form and therefore compete.

Its function is as follows. Key component of the KaiABC oscillator complex, which constitutes the main circadian regulator in cyanobacteria. Complex composition changes during the circadian cycle to control KaiC phosphorylation. KaiA stimulates KaiC autophosphorylation, while KaiB sequesters KaiA, leading to KaiC autodephosphorylation. KaiA binding to the KaiC CII domain during the subjective day yields KaiA(2-4):KaiC(6) complexes which stimulate KaiC autophosphorylation. Phospho-Ser-431 KaiC accumulation triggers binding of KaiB during the subjective night to form the KaiB(6):KaiC(6) complex, leading to changes in the output regulators CikA and SasA. KaiB(6):KaiC(6) formation exposes a site for KaiA binding on KaiB that sequesters KaiA from KaiC's CII domain, making the KaiC(6):KaiB(6):KaiA(12) complex resulting in KaiC autodephosphorylation. Complete dephosphorylation of KaiC leads to dissociation of KaiA(2):KaiB(1), completing 1 cycle of the Kai oscillator. In terms of biological role, binds oxidized quinones via the N-terminal PsR domain, allowing it to sense redox changes and possibly mediate clock input. The protein is Circadian clock oscillator protein KaiA of Thermostichus vulcanus (Synechococcus vulcanus).